A 232-amino-acid polypeptide reads, in one-letter code: Orotate phosphoribosyltransferase (232 aa).

Residues R107, K108, K111, and 133–141 (EDLTTDGGS) each bind 5-phospho-alpha-D-ribose 1-diphosphate. Residue T137 coordinates orotate.

The protein belongs to the purine/pyrimidine phosphoribosyltransferase family. PyrE subfamily. As to quaternary structure, homodimer. Mg(2+) is required as a cofactor.

It catalyses the reaction orotidine 5'-phosphate + diphosphate = orotate + 5-phospho-alpha-D-ribose 1-diphosphate. The protein operates within pyrimidine metabolism; UMP biosynthesis via de novo pathway; UMP from orotate: step 1/2. In terms of biological role, catalyzes the transfer of a ribosyl phosphate group from 5-phosphoribose 1-diphosphate to orotate, leading to the formation of orotidine monophosphate (OMP). This is Orotate phosphoribosyltransferase from Cereibacter sphaeroides (strain ATCC 17029 / ATH 2.4.9) (Rhodobacter sphaeroides).